Reading from the N-terminus, the 283-residue chain is Ribosomal RNA small subunit methyltransferase A (283 aa).

S-adenosyl-L-methionine contacts are provided by Asn-29, Leu-31, Gly-56, Glu-77, Asp-102, and Asn-123.

It belongs to the class I-like SAM-binding methyltransferase superfamily. rRNA adenine N(6)-methyltransferase family. RsmA subfamily.

The protein localises to the cytoplasm. It carries out the reaction adenosine(1518)/adenosine(1519) in 16S rRNA + 4 S-adenosyl-L-methionine = N(6)-dimethyladenosine(1518)/N(6)-dimethyladenosine(1519) in 16S rRNA + 4 S-adenosyl-L-homocysteine + 4 H(+). Its function is as follows. Specifically dimethylates two adjacent adenosines (A1518 and A1519) in the loop of a conserved hairpin near the 3'-end of 16S rRNA in the 30S particle. May play a critical role in biogenesis of 30S subunits. This chain is Ribosomal RNA small subunit methyltransferase A, found in Acidobacterium capsulatum (strain ATCC 51196 / DSM 11244 / BCRC 80197 / JCM 7670 / NBRC 15755 / NCIMB 13165 / 161).